The chain runs to 508 residues: Protein DETOXIFICATION 52 (508 aa).

12 helical membrane passes run 48-68, 78-98, 122-142, 156-176, 189-209, 222-242, 270-290, 300-320, 341-361, 368-388, 415-437, and 441-463; these read ILAA…LGHI, LAIA…ALGM, VLFL…LGKI, AQTY…LHPL, LTLA…FLVS, AAAS…IAGL, IGVC…GLLI, GILI…GLAV, IVAV…AWGV, IFTN…ILGL, INLG…WAAY, and GLWV…VVAT.

It belongs to the multi antimicrobial extrusion (MATE) (TC 2.A.66.1) family. Detected in the part of the veins in cotyledons of 6-day-old seedlings and the basal parts of the petioles in older plants. Highly expressed in the vascular tissues of hypocotyl in dark-grown seedlings.

The protein resides in the late endosome membrane. May act as a negative regulator of hypocotyl cell elongation in the light. This Arabidopsis thaliana (Mouse-ear cress) protein is Protein DETOXIFICATION 52.